Reading from the N-terminus, the 404-residue chain is Argininosuccinate synthase (404 aa).

An ATP-binding site is contributed by 7–15; the sequence is AYSGGLDTS. 2 residues coordinate L-citrulline: Tyr85 and Ser90. Gly115 lines the ATP pocket. Thr117, Asn121, and Asp122 together coordinate L-aspartate. Asn121 is an L-citrulline binding site. 5 residues coordinate L-citrulline: Arg125, Ser178, Ser187, Glu264, and Tyr276.

The protein belongs to the argininosuccinate synthase family. Type 1 subfamily. In terms of assembly, homotetramer.

Its subcellular location is the cytoplasm. The enzyme catalyses L-citrulline + L-aspartate + ATP = 2-(N(omega)-L-arginino)succinate + AMP + diphosphate + H(+). It functions in the pathway amino-acid biosynthesis; L-arginine biosynthesis; L-arginine from L-ornithine and carbamoyl phosphate: step 2/3. This is Argininosuccinate synthase from Rhodopirellula baltica (strain DSM 10527 / NCIMB 13988 / SH1).